Reading from the N-terminus, the 179-residue chain is Cytochrome c-type biogenesis protein CcmE (179 aa).

Over 1-8 the chain is Cytoplasmic; the sequence is MNPRRKSR. A helical; Signal-anchor for type II membrane protein transmembrane segment spans residues 9–29; that stretch reads LTIILFVLLGVTIASSLVLYA. Residues 30 to 179 are Periplasmic-facing; it reads LRQNIDLFYT…AVNSVEEGKK (150 aa). Residues His-131 and Tyr-135 each coordinate heme. Composition is skewed to basic and acidic residues over residues 138 to 148 and 161 to 179; these read PDLSEKMEQVH and ESDR…EGKK. The tract at residues 138-179 is disordered; that stretch reads PDLSEKMEQVHKPMGISNQDMQGESDRDRLDKAVNSVEEGKK.

Belongs to the CcmE/CycJ family.

The protein localises to the cell inner membrane. In terms of biological role, heme chaperone required for the biogenesis of c-type cytochromes. Transiently binds heme delivered by CcmC and transfers the heme to apo-cytochromes in a process facilitated by CcmF and CcmH. The chain is Cytochrome c-type biogenesis protein CcmE from Mannheimia succiniciproducens (strain KCTC 0769BP / MBEL55E).